We begin with the raw amino-acid sequence, 430 residues long: Mothers against decapentaplegic homolog 9 (430 aa).

One can recognise an MH1 domain in the interval 16–140 (PAVKRLLGWK…YRRVETPVLP (125 aa)). C68, C113, C125, and H130 together coordinate Zn(2+). The disordered stretch occupies residues 186–222 (CPAPPSSPGHVFPQSPCPTSYPHSPGSPSESDSPYQH). A compositionally biased stretch (polar residues) spans 202–221 (CPTSYPHSPGSPSESDSPYQ). One can recognise an MH2 domain in the interval 236–430 (WCSVAYYELN…SPHNPISSVS (195 aa)).

The protein belongs to the dwarfin/SMAD family. In terms of assembly, interaction with the co-SMAD SMAD4. Interacts with PEBP2-alpha subunit. Interacts with RANBP3L. Phosphorylated on serine by BMP (bone morphogenetic proteins) type 1 receptor kinase and activin type I receptor-like kinases (ALK-2, ALK-3 and ALK-6).

Its subcellular location is the cytoplasm. The protein localises to the nucleus. In terms of biological role, transcriptional modulator activated by BMP (bone morphogenetic proteins) type 1 receptor kinase. SMAD9 is a receptor-regulated SMAD (R-SMAD). Has been shown to be activated by activin type I receptor-like kinases (ALK-2, ALK-3, ALK-6) which stimulate heteromerization between SMAD9 and SMAD4. May play a role in osteoblast differentiation and maturation. This Mus musculus (Mouse) protein is Mothers against decapentaplegic homolog 9 (Smad9).